Here is a 359-residue protein sequence, read N- to C-terminus: Peptide chain release factor 1 (359 aa).

Residue Q236 is modified to N5-methylglutamine.

It belongs to the prokaryotic/mitochondrial release factor family. Post-translationally, methylated by PrmC. Methylation increases the termination efficiency of RF1.

It is found in the cytoplasm. In terms of biological role, peptide chain release factor 1 directs the termination of translation in response to the peptide chain termination codons UAG and UAA. The sequence is that of Peptide chain release factor 1 from Streptococcus pneumoniae (strain Hungary19A-6).